The chain runs to 183 residues: Large ribosomal subunit protein bL32m (183 aa).

The N-terminal 71 residues, 1 to 71, are a transit peptide targeting the mitochondrion; sequence MNSLIFGKQL…DFFSNNGILL (71 aa). Residues Cys104, Cys107, Cys117, and Cys120 each coordinate Zn(2+).

This sequence belongs to the bacterial ribosomal protein bL32 family. Component of the mitochondrial large ribosomal subunit (mt-LSU). Mature yeast 74S mitochondrial ribosomes consist of a small (37S) and a large (54S) subunit. The 37S small subunit contains a 15S ribosomal RNA (15S mt-rRNA) and 34 different proteins. The 54S large subunit contains a 21S rRNA (21S mt-rRNA) and 46 different proteins. bL32m has a zinc binding site. MRPL32 precursor is processed by the m-AAA protease (composed of YTA12/RCA1 and YTA10/AFG3), which cleaves the N-terminal transit peptide. Cleavage by the m-AAA protease takes place prior to assembly into the large subunit, an essential step for mitochondrial ribosome (mitoribosome) assembly. Proper processing by the m-AAA protease is dependent on the zinc-binding region within the tightly folded C-terminal domain of MRPL32: zinc-dependent folding halts degradation initiated from the N-terminus and triggers the release of mature MRPL32.

The protein resides in the mitochondrion. In terms of biological role, component of the mitochondrial ribosome (mitoribosome), a dedicated translation machinery responsible for the synthesis of mitochondrial genome-encoded proteins, including at least some of the essential transmembrane subunits of the mitochondrial respiratory chain. The mitoribosomes are attached to the mitochondrial inner membrane and translation products are cotranslationally integrated into the membrane. This is Large ribosomal subunit protein bL32m from Saccharomyces cerevisiae (strain ATCC 204508 / S288c) (Baker's yeast).